A 256-amino-acid polypeptide reads, in one-letter code: uncharacterized protein (256 aa).

Residues 187–223 (MEEEEISEVEDALNVLQRLCAQEEGDNKEAETNNNNY) adopt a coiled-coil conformation.

This is an uncharacterized protein from Ostreid herpesvirus 1 (isolate France) (OsHV-1).